A 207-amino-acid chain; its full sequence is High frequency lysogenization protein HflD homolog (207 aa).

This sequence belongs to the HflD family.

The protein resides in the cytoplasm. It is found in the cell inner membrane. This Pseudomonas fluorescens (strain SBW25) protein is High frequency lysogenization protein HflD homolog.